We begin with the raw amino-acid sequence, 279 residues long: MSDSETMSAAKSAAHILKRVLMVPPKHFTVEYTINPWMGGVVDKQKAHQQWNSLKSAIENAGVPVLTMEQTEGLPDQVFVCNSGLVYDDQVYLSRFRHKERSGEQPLYLEWFKKNNIKTIGEGYEEIFEGGGDAVFSDRKTLWAGYGERSSKSVYEKIKALGTFDIVLCDMILPNFYHLDTCFAPVDETSALYYPPAFSEATNKEILRRLPNSIAVSEAEANAFVCNAITIRDTVISPIGVSQATKDYLSARGKRVEEVDMSEFMKSGGACQCLVLRLL.

This is an uncharacterized protein from Caenorhabditis elegans.